The chain runs to 61 residues: UPF0434 protein Bfl377 (61 aa).

It belongs to the UPF0434 family.

In Blochmanniella floridana, this protein is UPF0434 protein Bfl377.